We begin with the raw amino-acid sequence, 373 residues long: tRNA-specific 2-thiouridylase MnmA (373 aa).

ATP is bound by residues 12-19 (GMSGGVDS) and Met38. Residues 98-100 (NPD) are interaction with target base in tRNA. The active-site Nucleophile is Cys103. A disulfide bridge links Cys103 with Cys200. Gly127 contacts ATP. Positions 150 to 152 (KDQ) are interaction with tRNA. The Cysteine persulfide intermediate role is filled by Cys200. An interaction with tRNA region spans residues 312 to 313 (RY).

Belongs to the MnmA/TRMU family.

It localises to the cytoplasm. The enzyme catalyses S-sulfanyl-L-cysteinyl-[protein] + uridine(34) in tRNA + AH2 + ATP = 2-thiouridine(34) in tRNA + L-cysteinyl-[protein] + A + AMP + diphosphate + H(+). In terms of biological role, catalyzes the 2-thiolation of uridine at the wobble position (U34) of tRNA, leading to the formation of s(2)U34. In Streptococcus agalactiae serotype III (strain NEM316), this protein is tRNA-specific 2-thiouridylase MnmA.